The sequence spans 427 residues: MYDFIANLRWRGMIHDITPGLEAQLQKEMITGYIGFDPTAPSLHVGNLATIMLLKHFQLAGHKPIAVVGGATGMIGDPSFKSTERKFLSEEELLHNQSCIMKQLKCFLDFSSSANTAELLNNIDWFKDFGFLRFLREVGKHISINYMMAKESVKRRLEDGISFTEFSYQLLQGYDFYYLYNTKGVKLQMGGADQWGNLTTGIELIRRKTGEEAFALTAPLITKADGTKFGKSEQGNIWLDSTMTSPYEFYQFWLNCTDEDACRLIKVFTLLSKEEIDNLIELHVQAPHQRILQKQIAKELTIRVHSETDYMQARKTSELLFGHATAEDLWELSEKDFKVIFKSIPEVHITLTQLTEAEHMLDLVASTGFGIMFNSKGEVRRAIQEGSLSVNKEKITDPLQKPNLKLLQDKYLLVQRGKKHHYLIKVS.

Y33 is a binding site for L-tyrosine. Residues 38–47 (PTAPSLHVGN) carry the 'HIGH' region motif. The L-tyrosine site is built by Y168 and Q172. A 'KMSKS' region motif is present at residues 228 to 232 (KFGKS). K231 is a binding site for ATP. The region spanning 358-426 (EHMLDLVAST…GKKHHYLIKV (69 aa)) is the S4 RNA-binding domain.

It belongs to the class-I aminoacyl-tRNA synthetase family. TyrS type 1 subfamily. In terms of assembly, homodimer.

Its subcellular location is the cytoplasm. It carries out the reaction tRNA(Tyr) + L-tyrosine + ATP = L-tyrosyl-tRNA(Tyr) + AMP + diphosphate + H(+). Functionally, catalyzes the attachment of tyrosine to tRNA(Tyr) in a two-step reaction: tyrosine is first activated by ATP to form Tyr-AMP and then transferred to the acceptor end of tRNA(Tyr). This chain is Tyrosine--tRNA ligase, found in Amoebophilus asiaticus (strain 5a2).